A 24-amino-acid polypeptide reads, in one-letter code: Brevinin-1Sa (24 aa).

Cys18 and Cys24 are joined by a disulfide.

As to expression, expressed by the skin glands.

It localises to the secreted. Its function is as follows. Antibacterial activity against Gram-negative bacterium E.coli. The sequence is that of Brevinin-1Sa from Lithobates sphenocephalus (Southern leopard frog).